We begin with the raw amino-acid sequence, 73 residues long: Large ribosomal subunit protein bL31 (73 aa).

This sequence belongs to the bacterial ribosomal protein bL31 family. Type A subfamily. As to quaternary structure, part of the 50S ribosomal subunit.

In terms of biological role, binds the 23S rRNA. This Bartonella tribocorum (strain CIP 105476 / IBS 506) protein is Large ribosomal subunit protein bL31.